The following is a 1578-amino-acid chain: Formin-2 (1578 aa).

Basic and acidic residues-rich tracts occupy residues 1–17 (MGNQ…DASH), 26–35 (AGPRDAEITK), and 57–66 (TSKKKSKSDS). The tract at residues 1 to 73 (MGNQDGKLKR…SDSRASVFSN (73 aa)) is disordered. Ser-89 bears the Phosphoserine mark. Disordered stretches follow at residues 208 to 230 (KLLL…QPGA), 244 to 383 (EAEK…PSPR), and 401 to 458 (RQLS…GLSR). Polar residues-rich tracts occupy residues 273 to 282 (SSGSHLTSET) and 290 to 300 (SAVTDSLSSPA). Residues 322–333 (DTDEECEEDAFE) are compositionally biased toward acidic residues. Over residues 351–364 (ASQRLEKEPEEGMR) the composition is skewed to basic and acidic residues. 2 stretches are compositionally biased toward low complexity: residues 404–418 (SSPN…NQSP) and 427–442 (SVSR…AAAP). 3 positions are modified to phosphoserine: Ser-459, Ser-489, and Ser-493. Positions 587–634 (SMDYSEGQFPRREPSMWPSSKLPEEEPSPKDVDTEPKSSILESPKKCS) are disordered. Over residues 608–622 (LPEEEPSPKDVDTEP) the composition is skewed to basic and acidic residues. The stretch at 643-683 (DVKSEGQATVIQQLEQTIEDLRTKIAELEKQYPALDLEGPR) forms a coiled coil. Disordered regions lie at residues 714 to 765 (RTLE…SGPQ), 786 to 836 (DAQQ…GNNC), and 880 to 944 (PALQ…MGIS). One can recognise an FH1 domain in the interval 735–1124 (PPPKAPPEGL…GCGFLFPPLP (390 aa)). The span at 786-795 (DAQQIQSASQ) shows a compositional bias: polar residues. Over residues 803–817 (LGSDSQGQPSQPSLH) the composition is skewed to low complexity. Over residues 818 to 827 (TESETSHEHS) the composition is skewed to basic and acidic residues. Pro residues predominate over residues 893 to 944 (LPAPPQPPPLPGLGVPPPPPAPPLPGMGIPPPPPLPGMGIPPPPPLPGMGIS). Tandem repeats lie at residues 919–929 (MGIPPPPPLPG), 930–940 (MGIPPPPPLPG), 941–951 (MGISPLPPLPG), 952–962 (MGIPPPPPLPG), 963–973 (VGIPPPPPLPG), 974–984 (VGIPPPPPLPG), 985–995 (VGIPPPPPLPG), 996–1006 (VGIPPPPPLPG), 1007–1017 (VGIPPPPPLPG), 1018–1028 (VGIPPPPPLPG), 1029–1039 (VGIPPPPPLPG), and 1040–1050 (VGIPPPPPLPG). The 12 X 11 AA tandem repeats of [MV]-G-I-P-P-P-P-P-L-P-G stretch occupies residues 919 to 1039 (MGIPPPPPLP…GIPPPPPLPG (121 aa)). A compositionally biased stretch (pro residues) spans 1037–1097 (LPGVGIPPPP…PPPPLLPGSG (61 aa)). Positions 1037 to 1108 (LPGVGIPPPP…PHSSQVGSST (72 aa)) are disordered. The FH2 domain occupies 1139–1554 (RKQLIEPCRP…KEAEEVCRQK (416 aa)). Residues 1419–1455 (QELFQASQMKFEDFQKDLRKLKKDLKACEAEAGKVYQ) adopt a coiled-coil conformation. Residues 1571 to 1578 (KAKISMKT) form an important for interaction with SPIRE1 region.

This sequence belongs to the formin homology family. Cappuccino subfamily. Interacts with SPIRE1. Binds actin. Interacts with CDKN1A. Detected in brain and in oocytes (at protein level). Expressed almost exclusively in the developing and mature central nervous system. Detected in oocytes.

It localises to the cytoplasm. Its subcellular location is the cytoskeleton. The protein resides in the cytosol. The protein localises to the perinuclear region. It is found in the nucleus. It localises to the nucleolus. Its subcellular location is the cell membrane. The protein resides in the cell cortex. The protein localises to the cytoplasmic vesicle membrane. Functionally, actin-binding protein that is involved in actin cytoskeleton assembly and reorganization. Acts as an actin nucleation factor and promotes assembly of actin filaments together with SPIRE1 and SPIRE2. Involved in intracellular vesicle transport along actin fibers, providing a novel link between actin cytoskeleton dynamics and intracellular transport. Required for asymmetric spindle positioning, asymmetric oocyte division and polar body extrusion during female germ cell meiosis. Plays a role in responses to DNA damage, cellular stress and hypoxia by protecting CDKN1A against degradation, and thereby plays a role in stress-induced cell cycle arrest. Also acts in the nucleus: together with SPIRE1 and SPIRE2, promotes assembly of nuclear actin filaments in response to DNA damage in order to facilitate movement of chromatin and repair factors after DNA damage. Protects cells against apoptosis by protecting CDKN1A against degradation. The protein is Formin-2 (Fmn2) of Mus musculus (Mouse).